Here is a 313-residue protein sequence, read N- to C-terminus: Small glutamine-rich tetratricopeptide repeat-containing protein alpha (313 aa).

Positions 69–97 (KELPPDLRSPQETPPSEEDSAEAERLKTE) are disordered. The residue at position 77 (Ser-77) is a Phosphoserine. Thr-81 is modified (phosphothreonine). Ser-84 carries the post-translational modification Phosphoserine. TPR repeat units lie at residues 91 to 124 (AERL…NPAN), 125 to 158 (AVYF…DPSY), and 159 to 192 (SKAY…DPDN). An N6-acetyllysine modification is found at Lys-137. Position 301 is a phosphoserine (Ser-301). At Thr-303 the chain carries Phosphothreonine. The residue at position 305 (Ser-305) is a Phosphoserine.

It belongs to the SGT family. As to quaternary structure, homodimer. Homooligomer. Interacts with DNAJC5 and DNAJC5B. Interacts (via TPR repeats) with HSP90AA1. Interacts (via Gln-rich region) with SLC2A1. Interacts with HSP90AB1. Interacts (via TPR repeats) with HSPA8/Hsc70; the interaction is direct. Interacts with BAG6 (via ubiquitin-like domain); interaction prevents interaction between BAG6 and RNF126. Forms a multiprotein complex, at least composed of DNAJB12, DNAJB14, HSPA8/Hsc70 and SGTA; interaction with DNAJB14 and HSPA8/Hsc70 is direct.

It is found in the cytoplasm. The protein localises to the nucleus. Its function is as follows. Co-chaperone that binds misfolded and hydrophobic patches-containing client proteins in the cytosol. Mediates their targeting to the endoplasmic reticulum but also regulates their sorting to the proteasome when targeting fails. Functions in tail-anchored/type II transmembrane proteins membrane insertion constituting with ASNA1 and the BAG6 complex a targeting module. Functions upstream of the BAG6 complex and ASNA1, binding more rapidly the transmembrane domain of newly synthesized proteins. It is also involved in the regulation of the endoplasmic reticulum-associated misfolded protein catabolic process via its interaction with BAG6: collaborates with the BAG6 complex to maintain hydrophobic substrates in non-ubiquitinated states. Competes with RNF126 for interaction with BAG6, preventing the ubiquitination of client proteins associated with the BAG6 complex. Binds directly to HSC70 and HSP70 and regulates their ATPase activity. The polypeptide is Small glutamine-rich tetratricopeptide repeat-containing protein alpha (SGTA) (Bos taurus (Bovine)).